A 138-amino-acid chain; its full sequence is Putative pre-16S rRNA nuclease (138 aa).

Belongs to the YqgF nuclease family.

The protein localises to the cytoplasm. In terms of biological role, could be a nuclease involved in processing of the 5'-end of pre-16S rRNA. This is Putative pre-16S rRNA nuclease from Escherichia coli O7:K1 (strain IAI39 / ExPEC).